The primary structure comprises 248 residues: Pyridoxal 4-dehydrogenase (248 aa).

L11 to I35 contacts NAD(+). Substrate is bound at residue S141. The Proton acceptor role is filled by Y154.

Belongs to the short-chain dehydrogenases/reductases (SDR) family. Homotetramer.

The catalysed reaction is pyridoxal + NAD(+) = 4-pyridoxolactone + NADH + H(+). It participates in cofactor degradation; B6 vitamer degradation; 4-pyridoxate from pyridoxal: step 1/2. Involved in the degradation of pyridoxine or pyridoxamine (free, phosphate-unbound, forms of vitamin B6). Oxidizes pyridoxal to 4-pyridoxolactone, but does not have activity toward pyridoxal 5'-phosphate, pyridoxine, pyridoxamine, pyridoxamine 5'-phosphate, 4-phthalaldehyde, 2-nitrobenzaldehyde, pyridine, formaldehyde, 2-carboxybenzaldehyde or sugars. This is Pyridoxal 4-dehydrogenase from Mesorhizobium japonicum (strain LMG 29417 / CECT 9101 / MAFF 303099) (Mesorhizobium loti (strain MAFF 303099)).